The chain runs to 209 residues: High frequency lysogenization protein HflD homolog (209 aa).

The stretch at 95 to 132 (LERKLAASKGAMNTLGNRIADLSRQLEHFELESDTLMS) forms a coiled coil.

The protein belongs to the HflD family.

It is found in the cytoplasm. The protein resides in the cell inner membrane. The polypeptide is High frequency lysogenization protein HflD homolog (Cronobacter sakazakii (strain ATCC BAA-894) (Enterobacter sakazakii)).